Reading from the N-terminus, the 1169-residue chain is Phospholipid-transporting ATPase IF (1169 aa).

Residues 1–47 (LGFDPPHQSDTRTIYIANRFPQNGLYTPQKFIDNRIISSKYTVWNFV) are Cytoplasmic-facing. A helical transmembrane segment spans residues 48–69 (PKNLFEQFRRVANFYFLIIFLV). At 70–74 (QLMID) the chain is on the extracellular side. Residues 75–96 (TPTSPITSGLPLFFVITVTAIK) form a helical membrane-spanning segment. At 97 to 281 (QGYEDWLRHN…SAVEKSMNTF (185 aa)) the chain is on the cytoplasmic side. Residues 282–303 (LIIYLIILISEAIISTILKYTW) traverse the membrane as a helical segment. Over 304 to 333 (QAEEKWDEPWYNQKTEHQRNSSKILRFISD) the chain is Extracellular. Residues 334-351 (FLAFLVLYNFIIPISLYV) traverse the membrane as a helical segment. At 352–868 (TVEMQKFLGS…HGHFYYIRIA (517 aa)) the chain is on the cytoplasmic side. The 4-aspartylphosphate intermediate role is filled by D399. Residues D399, K400, T401, E523, F564, K587, R618, T698, G699, D700, R786, and K792 each contribute to the ATP site. Residue D399 participates in Mg(2+) binding. T401 lines the Mg(2+) pocket. The required for binding to the RING-finger of HLTF stretch occupies residues 794–802 (KVIRLIKIS). D813 contributes to the Mg(2+) binding site. ATP contacts are provided by N816 and D817. D817 contacts Mg(2+). Residues 869 to 890 (TLVQYFFYKNVCFITPQFLYQF) traverse the membrane as a helical segment. Topologically, residues 891-902 (YCLFSQQTLYDS) are extracellular. Residues 903 to 922 (VYLTLYNICFTSLPILIYSL) traverse the membrane as a helical segment. Residues 923–952 (LEQHIDPHILQNKPTLYRDISKNRLLSIKT) lie on the Cytoplasmic side of the membrane. A helical transmembrane segment spans residues 953–974 (FLYWTILGFSRSFIFLFGSYFL). The Extracellular portion of the chain corresponds to 975–989 (IGKDASLLGNGQMFG). The chain crosses the membrane as a helical span at residues 990–1012 (NWTFGTLVFTVMVITVTVKMALE). The Cytoplasmic segment spans residues 1013 to 1017 (THFWT). A helical membrane pass occupies residues 1018–1039 (WINHLVTWGSIIFYFVFSLFYG). The Extracellular portion of the chain corresponds to 1040–1057 (GILWPFLGSQNMYFVFIQ). The chain crosses the membrane as a helical span at residues 1058–1082 (LVSSGSAWFAIILMVVTCLFLDVMK). The Cytoplasmic segment spans residues 1083–1169 (KVFDRQLHPT…TLSTMDSSTC (87 aa)). Phosphoserine is present on S1146.

The protein belongs to the cation transport ATPase (P-type) (TC 3.A.3) family. Type IV subfamily. In terms of assembly, component of a P4-ATPase flippase complex which consists of a catalytic alpha subunit ATP11B and an accessory beta subunit TMEM30A. Interacts with HLTF (via the RING-finger). Requires Mg(2+) as cofactor. As to expression, ubiquitously expressed.

The protein resides in the recycling endosome membrane. The protein localises to the early endosome. It localises to the endoplasmic reticulum. It is found in the golgi apparatus. Its subcellular location is the trans-Golgi network. The protein resides in the nucleus inner membrane. It carries out the reaction ATP + H2O + phospholipidSide 1 = ADP + phosphate + phospholipidSide 2.. The catalysed reaction is a 1,2-diacyl-sn-glycero-3-phospho-L-serine(out) + ATP + H2O = a 1,2-diacyl-sn-glycero-3-phospho-L-serine(in) + ADP + phosphate + H(+). The enzyme catalyses a 1,2-diacyl-sn-glycero-3-phosphoethanolamine(out) + ATP + H2O = a 1,2-diacyl-sn-glycero-3-phosphoethanolamine(in) + ADP + phosphate + H(+). Catalytic component of a P4-ATPase flippase complex which catalyzes the hydrolysis of ATP coupled to the transport of aminophospholipids, phosphatidylserines (PS) and phosphatidylethanolamines (PE), from the outer to the inner leaflet of intracellular membranes. May contribute to the maintenance of membrane lipid asymmetry in endosome compartment. In terms of biological role, appears to play a role in the subnuclear trafficking of transcription factors with RING motifs. In Oryctolagus cuniculus (Rabbit), this protein is Phospholipid-transporting ATPase IF (ATP11B).